A 297-amino-acid chain; its full sequence is Probable deoxyhypusine synthase (297 aa).

The Nucleophile role is filled by lysine 265.

The protein belongs to the deoxyhypusine synthase family. NAD(+) serves as cofactor.

It catalyses the reaction [eIF5A protein]-L-lysine + spermidine = [eIF5A protein]-deoxyhypusine + propane-1,3-diamine. Its pathway is protein modification; eIF5A hypusination. Its function is as follows. Catalyzes the NAD-dependent oxidative cleavage of spermidine and the subsequent transfer of the butylamine moiety of spermidine to the epsilon-amino group of a specific lysine residue of the eIF-5A precursor protein to form the intermediate deoxyhypusine residue. The chain is Probable deoxyhypusine synthase from Methanopyrus kandleri (strain AV19 / DSM 6324 / JCM 9639 / NBRC 100938).